The chain runs to 191 residues: Xanthine phosphoribosyltransferase (191 aa).

Positions 20 and 27 each coordinate xanthine. 128-132 (ANGQA) contributes to the 5-phospho-alpha-D-ribose 1-diphosphate binding site. A xanthine-binding site is contributed by Lys156.

It belongs to the purine/pyrimidine phosphoribosyltransferase family. Xpt subfamily. In terms of assembly, homodimer.

The protein resides in the cytoplasm. It carries out the reaction XMP + diphosphate = xanthine + 5-phospho-alpha-D-ribose 1-diphosphate. The protein operates within purine metabolism; XMP biosynthesis via salvage pathway; XMP from xanthine: step 1/1. Converts the preformed base xanthine, a product of nucleic acid breakdown, to xanthosine 5'-monophosphate (XMP), so it can be reused for RNA or DNA synthesis. The sequence is that of Xanthine phosphoribosyltransferase from Levilactobacillus brevis (strain ATCC 367 / BCRC 12310 / CIP 105137 / JCM 1170 / LMG 11437 / NCIMB 947 / NCTC 947) (Lactobacillus brevis).